Reading from the N-terminus, the 418-residue chain is Gamma-glutamyl phosphate reductase (418 aa).

It belongs to the gamma-glutamyl phosphate reductase family.

The protein resides in the cytoplasm. It carries out the reaction L-glutamate 5-semialdehyde + phosphate + NADP(+) = L-glutamyl 5-phosphate + NADPH + H(+). It functions in the pathway amino-acid biosynthesis; L-proline biosynthesis; L-glutamate 5-semialdehyde from L-glutamate: step 2/2. Catalyzes the NADPH-dependent reduction of L-glutamate 5-phosphate into L-glutamate 5-semialdehyde and phosphate. The product spontaneously undergoes cyclization to form 1-pyrroline-5-carboxylate. The sequence is that of Gamma-glutamyl phosphate reductase from Desulfatibacillum aliphaticivorans.